The sequence spans 556 residues: Putative solute carrier family 22 member 31 (556 aa).

The Cytoplasmic portion of the chain corresponds to 1–23; sequence MEQEARVLRAAGGFGRARRLLAS. Residues 24-44 traverse the membrane as a helical segment; sequence ASWVPCIVLGLVLSSEELLTA. Over 45–128 the chain is Extracellular; the sequence is QPAPHCRPDP…WNLVCGDGWK (84 aa). A helical transmembrane segment spans residues 129-149; that stretch reads VPLEQVSHLLGWLLGCVILGA. Topologically, residues 150-157 are cytoplasmic; that stretch reads GCDRFGRR. The helical transmembrane segment at 158–178 threads the bilayer; sequence AVFVASLVLTTGLGASEALAA. The Extracellular segment spans residues 179–182; sequence SFPT. Residues 183–203 form a helical membrane-spanning segment; the sequence is LLVLRLLHGGTLAGALLALYL. At 204–218 the chain is on the cytoplasmic side; it reads ARLELCDPPHRLAFS. A helical transmembrane segment spans residues 219-239; sequence MGAGLFSVVGTLLLPGLAALV. At 240–246 the chain is on the extracellular side; that stretch reads QDWRLLQ. The chain crosses the membrane as a helical span at residues 247 to 267; it reads GLGALMSGLLLLFWGFPALFP. At 268-339 the chain is on the cytoplasmic side; sequence ESPCWLLATG…LRTRVTWRNG (72 aa). The chain crosses the membrane as a helical span at residues 340 to 357; it reads LILGFSSLVGGGIRASFR. Over 358–366 the chain is Extracellular; the sequence is RSLAPQVPT. The helical transmembrane segment at 367 to 387 threads the bilayer; sequence FYLPYFLEAGLEAAALVFLLL. Topologically, residues 388–395 are cytoplasmic; the sequence is TADCCGRR. The chain crosses the membrane as a helical span at residues 396 to 416; sequence PVLLLGTMVTGLASLLLLAGA. Residues 417–420 lie on the Extracellular side of the membrane; it reads QYLP. Residues 421 to 441 form a helical membrane-spanning segment; it reads GWTVLFLSVLGLLASRAVSAL. At 442–448 the chain is on the cytoplasmic side; sequence SSLFAAE. The helical transmembrane segment at 449 to 469 threads the bilayer; the sequence is VFPTVIRGAGLGLVLGAGFLG. Residues 470-483 are Extracellular-facing; that stretch reads QAAGPLDTLHGRQG. Residues 484-504 form a helical membrane-spanning segment; it reads FFLQQVVFASLAVLALLCVLL. The Cytoplasmic segment spans residues 505–556; that stretch reads LPESRSRGLPQSLQDADRLRRSPLLRGRPRQDHLPLLPPSNSYWAGHTPEQH. A disordered region spans residues 524-556; that stretch reads RRSPLLRGRPRQDHLPLLPPSNSYWAGHTPEQH.

Belongs to the major facilitator (TC 2.A.1) superfamily. Organic cation transporter (TC 2.A.1.19) family.

The protein localises to the membrane. Functionally, organic anion transporter that mediates the uptake of ions. The sequence is that of Putative solute carrier family 22 member 31 from Homo sapiens (Human).